The following is a 230-amino-acid chain: uncharacterized protein (230 aa).

The region spanning 2–230 (IQLSNVRKSY…ASSGQRSVGE (229 aa)) is the ABC transporter domain. Residue 38-45 (GPSGSGKS) participates in ATP binding.

Belongs to the ABC transporter superfamily. Part of a complex composed of YknX, YknY and YknZ. The complex interacts with YknW.

The protein localises to the cell membrane. Its function is as follows. Part of an unusual four-component transporter, which is required for protection against the killing factor SdpC (sporulation-delaying protein). This is an uncharacterized protein from Bacillus subtilis (strain 168).